Here is a 430-residue protein sequence, read N- to C-terminus: Dihydrolipoyllysine-residue acetyltransferase component of pyruvate dehydrogenase complex (430 aa).

A Lipoyl-binding domain is found at 2-77; the sequence is AFEFRLPDIG…VVGDVIVKID (76 aa). Position 43 is an N6-lipoyllysine (lysine 43). The disordered stretch occupies residues 80 to 122; sequence DAEDMQFKGHDDDSSSKEEPAKEEAPAEQAPVATQTEEVDENR. A compositionally biased stretch (basic and acidic residues) spans 84–104; that stretch reads MQFKGHDDDSSSKEEPAKEEA. The region spanning 125–162 is the Peripheral subunit-binding (PSBD) domain; the sequence is KAMPSVRKYAREKGVNIKAVSGSGKNGRITKEDVDAYL. Positions 165–200 are disordered; it reads GAPTASNESAASATSEEVAETPAAPAAVTLEGDFPE. Residues 166–193 are compositionally biased toward low complexity; that stretch reads APTASNESAASATSEEVAETPAAPAAVT. Residue histidine 401 is part of the active site.

It belongs to the 2-oxoacid dehydrogenase family. As to quaternary structure, forms a 24-polypeptide structural core with octahedral symmetry. (R)-lipoate serves as cofactor.

The enzyme catalyses N(6)-[(R)-dihydrolipoyl]-L-lysyl-[protein] + acetyl-CoA = N(6)-[(R)-S(8)-acetyldihydrolipoyl]-L-lysyl-[protein] + CoA. Its function is as follows. The pyruvate dehydrogenase complex catalyzes the overall conversion of pyruvate to acetyl-CoA and CO(2). It contains multiple copies of three enzymatic components: pyruvate dehydrogenase (E1), dihydrolipoamide acetyltransferase (E2) and lipoamide dehydrogenase (E3). The sequence is that of Dihydrolipoyllysine-residue acetyltransferase component of pyruvate dehydrogenase complex (pdhC) from Staphylococcus aureus (strain COL).